A 424-amino-acid polypeptide reads, in one-letter code: UPF0229 protein Ping_2705 (424 aa).

A disordered region spans residues 77 to 108; that stretch reads PGNQDFIGGDRIERPPSGGAGGSGSGASDSGK.

The protein belongs to the UPF0229 family.

The chain is UPF0229 protein Ping_2705 from Psychromonas ingrahamii (strain DSM 17664 / CCUG 51855 / 37).